The following is an 86-amino-acid chain: Mu-theraphotoxin-Hhn1d (86 aa).

Positions methionine 1–alanine 21 are cleaved as a signal peptide. The propeptide occupies serine 22–arginine 49. 3 disulfide bridges follow: cysteine 51–cysteine 66, cysteine 58–cysteine 73, and cysteine 65–cysteine 80. An Isoleucine amide modification is found at isoleucine 84.

Belongs to the neurotoxin 10 (Hwtx-1) family. 22 (Htx-4) subfamily. Monomer. In terms of tissue distribution, expressed by the venom gland.

The protein localises to the secreted. In terms of biological role, neurotoxin. Selectively blocks neuronal tetrodotoxin-sensitive voltage-gated sodium channels (Nav). Does not affect tetrodotoxin-resistant voltage-gated sodium channels or calcium channels. In Cyriopagopus hainanus (Chinese bird spider), this protein is Mu-theraphotoxin-Hhn1d.